A 98-amino-acid polypeptide reads, in one-letter code: Small ribosomal subunit protein eS24 (98 aa).

It belongs to the eukaryotic ribosomal protein eS24 family.

This Thermoplasma acidophilum (strain ATCC 25905 / DSM 1728 / JCM 9062 / NBRC 15155 / AMRC-C165) protein is Small ribosomal subunit protein eS24 (rps2e).